The chain runs to 122 residues: Large ribosomal subunit protein uL14 (122 aa).

This sequence belongs to the universal ribosomal protein uL14 family. In terms of assembly, part of the 50S ribosomal subunit. Forms a cluster with proteins L3 and L19. In the 70S ribosome, L14 and L19 interact and together make contacts with the 16S rRNA in bridges B5 and B8.

Functionally, binds to 23S rRNA. Forms part of two intersubunit bridges in the 70S ribosome. In Psychromonas ingrahamii (strain DSM 17664 / CCUG 51855 / 37), this protein is Large ribosomal subunit protein uL14.